Consider the following 110-residue polypeptide: Integration host factor subunit alpha (110 aa).

Belongs to the bacterial histone-like protein family. In terms of assembly, heterodimer of an alpha and a beta chain.

Functionally, this protein is one of the two subunits of integration host factor, a specific DNA-binding protein that functions in genetic recombination as well as in transcriptional and translational control. The sequence is that of Integration host factor subunit alpha from Methylococcus capsulatus (strain ATCC 33009 / NCIMB 11132 / Bath).